Reading from the N-terminus, the 351-residue chain is Phospho-N-acetylmuramoyl-pentapeptide-transferase (351 aa).

The next 10 membrane-spanning stretches (helical) occupy residues 3–23, 51–71, 76–96, 113–133, 152–172, 181–201, 223–243, 250–270, 275–295, and 329–349; these read GIIA…PPLI, TMGG…AHAV, PTVS…VGFL, GAKM…VTMF, FGPP…IVAT, GLDG…VIIG, PLDL…FLWF, IFMG…LAIT, LLLL…IIQV, and FWII…LEWM.

Belongs to the glycosyltransferase 4 family. MraY subfamily. Requires Mg(2+) as cofactor.

It is found in the cell membrane. It catalyses the reaction UDP-N-acetyl-alpha-D-muramoyl-L-alanyl-gamma-D-glutamyl-meso-2,6-diaminopimeloyl-D-alanyl-D-alanine + di-trans,octa-cis-undecaprenyl phosphate = di-trans,octa-cis-undecaprenyl diphospho-N-acetyl-alpha-D-muramoyl-L-alanyl-D-glutamyl-meso-2,6-diaminopimeloyl-D-alanyl-D-alanine + UMP. The protein operates within cell wall biogenesis; peptidoglycan biosynthesis. Its function is as follows. Catalyzes the initial step of the lipid cycle reactions in the biosynthesis of the cell wall peptidoglycan: transfers peptidoglycan precursor phospho-MurNAc-pentapeptide from UDP-MurNAc-pentapeptide onto the lipid carrier undecaprenyl phosphate, yielding undecaprenyl-pyrophosphoryl-MurNAc-pentapeptide, known as lipid I. This chain is Phospho-N-acetylmuramoyl-pentapeptide-transferase, found in Thermobifida fusca (strain YX).